The following is a 316-amino-acid chain: Probable cell division protein WhiA (316 aa).

A DNA-binding region (H-T-H motif) is located at residues 274-308 (SLKELGEMVSTGVISKSGVNHRLRKIDEIAEKLRN).

It belongs to the WhiA family.

Functionally, involved in cell division and chromosome segregation. The polypeptide is Probable cell division protein WhiA (Macrococcus caseolyticus (strain JCSC5402) (Macrococcoides caseolyticum)).